The primary structure comprises 164 residues: Transcription antitermination protein NusB (164 aa).

The protein belongs to the NusB family.

Its function is as follows. Involved in transcription antitermination. Required for transcription of ribosomal RNA (rRNA) genes. Binds specifically to the boxA antiterminator sequence of the ribosomal RNA (rrn) operons. In Desulfovibrio desulfuricans (strain ATCC 27774 / DSM 6949 / MB), this protein is Transcription antitermination protein NusB.